A 287-amino-acid polypeptide reads, in one-letter code: Aquaporin PIP2-1 (287 aa).

Position 1 is an N-acetylmethionine (Met-1). Residues 2–39 are Cytoplasmic-facing; sequence AKDVEAVPGEGFQTRDYQDPPPAPFIDGAELKKWSFYR. Position 3 is an N6,N6-dimethyllysine; partial (Lys-3). The chain crosses the membrane as a helical span at residues 40 to 60; that stretch reads AVIAEFVATLLFLYITVLTVI. At 61 to 83 the chain is on the extracellular side; it reads GYKIQSDTDAGGVDCGGVGILGI. Residues 84–104 form a helical membrane-spanning segment; that stretch reads AWAFGGMIFILVYCTAGISGG. Over 105-125 the chain is Cytoplasmic; it reads HINPAVTFGLFLARKVSLPRA. An NPA 1 motif is present at residues 107–109; sequence NPA. A helical transmembrane segment spans residues 126–146; that stretch reads LLYIIAQCLGAICGVGFVKAF. Over 147–167 the chain is Extracellular; sequence QSSYYTRYGGGANSLADGYST. The chain crosses the membrane as a helical span at residues 168-188; it reads GTGLAAEIIGTFVLVYTVFSA. Over 189 to 201 the chain is Cytoplasmic; the sequence is TDPKRSARDSHVP. The helical transmembrane segment at 202 to 222 threads the bilayer; it reads VLAPLPIGFAVFMVHLATIPI. Residues 223 to 249 lie on the Extracellular side of the membrane; that stretch reads TGTGINPARSFGAAVIYNKSKPWDDHW. The NPA 2 motif lies at 228–230; the sequence is NPA. Residues 250 to 270 traverse the membrane as a helical segment; that stretch reads IFWVGPFIGAAIAAFYHQFVL. Topologically, residues 271–287 are cytoplasmic; the sequence is RASGSKSLGSFRSAANV. Phosphoserine occurs at positions 280 and 283.

It belongs to the MIP/aquaporin (TC 1.A.8) family. PIP (TC 1.A.8.11) subfamily. In terms of processing, ubiquitinated by RMA1, leading to proteasomal degradation. Post-translationally, the phosphorylation at Ser-280 and Ser-283 is altered by salt (NaCl) and hydrogen peroxide H(2)O(2) treatments. Phosphorylation of Ser-283 is required for plasma membrane targeting. In terms of tissue distribution, predominantly expressed in roots and green siliques. Also expressed at lower level above ground and in flower buds.

The protein localises to the cell membrane. Water channel required to facilitate the transport of water across cell membrane. Probably involved in root water uptake. Its function is impaired by Hg(2+). This is Aquaporin PIP2-1 (PIP2-1) from Arabidopsis thaliana (Mouse-ear cress).